A 454-amino-acid chain; its full sequence is Peroxisome assembly protein 10 (454 aa).

Over 1 to 23 the chain is Peroxisomal matrix; sequence MATQPPPARPPPPLTSSPYPYAA. The helical transmembrane segment at 24 to 53 threads the bilayer; that stretch reads APDIIRAHQKDAYFQGVLANRLSDLHRRLR. Residue Gly-54 is a topological domain, cytoplasmic. Residues 55–76 form a helical membrane-spanning segment; it reads ARSAHAWAAETRTFAAALYLCL. Over 77 to 132 the chain is Peroxisomal matrix; sequence TTLLGNRTLGEEYCDLVQVEEAPSKLFASSSSKAADDHIYENGLGGGGDGGPLLPS. The helical transmembrane segment at 133–165 threads the bilayer; the sequence is LPRRAGYILTAIVLPHLASRALPSVRSAIRKRL. Residues 166 to 201 are Cytoplasmic-facing; the sequence is QSRLATLSRRRQQTGTKSGSGRGGRGGGGGITEYRV. Residues 171–194 form a disordered region; the sequence is TLSRRRQQTGTKSGSGRGGRGGGG. The span at 183–194 shows a compositional bias: gly residues; it reads SGSGRGGRGGGG. The helical transmembrane segment at 202-229 threads the bilayer; it reads LRYLLTHLTPLTSGAHFRAATLAVFYFT. At 230 to 276 the chain is on the peroxisomal matrix side; the sequence is GAYYELSKWVWGLRYVFTTRAGRVVDDDHNRHHHSPQHGGGNGGRAG. A helical transmembrane segment spans residues 277–296; the sequence is YEVLGVLLVVQMAVRAWLHV. The Cytoplasmic portion of the chain corresponds to 297–454; that stretch reads REQLSSGSVA…VQHILPLRAA (158 aa). The segment at 302 to 329 is disordered; the sequence is SGSVAGGGGEEEEDGEDGFRERTAFGPG. Residues Cys-402, Cys-405, Cys-417, His-419, Cys-422, Cys-425, Cys-436, and Cys-439 each coordinate Zn(2+). An RING-type zinc finger spans residues 402 to 440; it reads CTLCLEELKDPAATQCGHVFCWACIGDWVREKPECPLCR.

This sequence belongs to the pex2/pex10/pex12 family. Component of the PEX2-PEX10-PEX12 retrotranslocation channel, composed of PEX2, PEX10 and PEX12.

The protein localises to the peroxisome membrane. It catalyses the reaction S-ubiquitinyl-[E2 ubiquitin-conjugating enzyme]-L-cysteine + [acceptor protein]-L-lysine = [E2 ubiquitin-conjugating enzyme]-L-cysteine + N(6)-ubiquitinyl-[acceptor protein]-L-lysine.. Its pathway is protein modification; protein ubiquitination. With respect to regulation, the E3 ubiquitin-protein ligase activity is stimulated by PEX12. In terms of biological role, E3 ubiquitin-protein ligase component of a retrotranslocation channel required for peroxisome organization by mediating export of the PEX5 receptor from peroxisomes to the cytosol, thereby promoting PEX5 recycling. The retrotranslocation channel is composed of PEX2, PEX10 and PEX12; each subunit contributing transmembrane segments that coassemble into an open channel that specifically allows the passage of PEX5 through the peroxisomal membrane. PEX10 also regulates PEX5 recycling by acting as a E3 ubiquitin-protein ligase. When PEX5 recycling is compromised, PEX10 catalyzes polyubiquitination of PEX5 during its passage through the retrotranslocation channel, leading to its degradation. The protein is Peroxisome assembly protein 10 of Thermothelomyces thermophilus (strain ATCC 42464 / BCRC 31852 / DSM 1799) (Sporotrichum thermophile).